A 351-amino-acid chain; its full sequence is Ion-translocating oxidoreductase complex subunit D (351 aa).

Transmembrane regions (helical) follow at residues Ile20 to Gly40, Leu44 to Leu64, Leu89 to Ala109, and Pro123 to Leu143. Thr187 is modified (FMN phosphoryl threonine). 5 helical membrane-spanning segments follow: residues Leu215–Leu235, Ile244–Pro264, Phe267–Ala287, Leu301–Pro321, and Asp322–Thr342.

Belongs to the NqrB/RnfD family. As to quaternary structure, the complex is composed of six subunits: RnfA, RnfB, RnfC, RnfD, RnfE and RnfG. FMN serves as cofactor.

Its subcellular location is the cell inner membrane. Its function is as follows. Part of a membrane-bound complex that couples electron transfer with translocation of ions across the membrane. The protein is Ion-translocating oxidoreductase complex subunit D of Pectobacterium atrosepticum (strain SCRI 1043 / ATCC BAA-672) (Erwinia carotovora subsp. atroseptica).